A 235-amino-acid polypeptide reads, in one-letter code: DnaA regulatory inactivator Hda (235 aa).

This sequence belongs to the DnaA family. HdA subfamily. In terms of assembly, the active form seems to be an ADP-bound monomer. Forms the RIDA complex (regulatory inactivation of DnaA) of ATP-DnaA, ADP-Hda and the DNA-loaded beta sliding clamp (dnaN).

Mediates the interaction of DNA replication initiator protein DnaA with DNA polymerase subunit beta sliding clamp (dnaN). Stimulates hydrolysis of ATP-DnaA to ADP-DnaA, rendering DnaA inactive for reinitiation, a process called regulatory inhibition of DnaA or RIDA. The chain is DnaA regulatory inactivator Hda from Yersinia pestis bv. Antiqua (strain Antiqua).